Reading from the N-terminus, the 1226-residue chain is uncharacterized protein (1226 aa).

Belongs to the Mg-chelatase subunit H family.

This is an uncharacterized protein from Methanocaldococcus jannaschii (strain ATCC 43067 / DSM 2661 / JAL-1 / JCM 10045 / NBRC 100440) (Methanococcus jannaschii).